The primary structure comprises 627 residues: (+)-sabinene synthase, chloroplastic (627 aa).

The N-terminal 46 residues, 1–46 (MSVISIVPLASNSCLYKSLMSSTHELKALCRPIATLGMCRRGKSVM), are a transit peptide targeting the chloroplast. Residues Asp-378, Asp-382, and Asp-530 each contribute to the Mg(2+) site. The DDXXD motif motif lies at 378 to 382 (DDIYD).

This sequence belongs to the terpene synthase family. Tpsd subfamily. As to quaternary structure, monomer. Mg(2+) is required as a cofactor.

It localises to the plastid. The protein resides in the chloroplast. It catalyses the reaction (2E)-geranyl diphosphate = (1R,5R)-sabinene + diphosphate. It participates in terpene metabolism; oleoresin biosynthesis. Functionally, terpene synthase (TPS) involved in defensive oleoresin formation in conifers in response to insect attack (e.g. white pine weevil P.strobi) or other injury. Produces (+)-sabinene from geranyl diphosphate, but has no activity with geranylgeranyl diphosphate or farnesyl diphosphate. In Picea sitchensis (Sitka spruce), this protein is (+)-sabinene synthase, chloroplastic (TPS-sab).